The primary structure comprises 523 residues: GMP synthase [glutamine-hydrolyzing] (523 aa).

The Glutamine amidotransferase type-1 domain occupies 8 to 205 (KILILDFGSQ…VVNICGCATN (198 aa)). The active-site Nucleophile is C85. Residues H179 and E181 contribute to the active site. The GMPS ATP-PPase domain maps to 206–398 (WTPENIIEDA…LGLPAEMLNR (193 aa)). 233 to 239 (SGGVDSS) lines the ATP pocket.

As to quaternary structure, homodimer.

The enzyme catalyses XMP + L-glutamine + ATP + H2O = GMP + L-glutamate + AMP + diphosphate + 2 H(+). Its pathway is purine metabolism; GMP biosynthesis; GMP from XMP (L-Gln route): step 1/1. Catalyzes the synthesis of GMP from XMP. The sequence is that of GMP synthase [glutamine-hydrolyzing] from Actinobacillus succinogenes (strain ATCC 55618 / DSM 22257 / CCUG 43843 / 130Z).